Reading from the N-terminus, the 618-residue chain is Glutamine--fructose-6-phosphate aminotransferase [isomerizing] (618 aa).

Catalysis depends on cysteine 2, which acts as the Nucleophile; for GATase activity. A Glutamine amidotransferase type-2 domain is found at cysteine 2–aspartate 226. The segment at tryptophan 72–asparagine 91 is disordered. 2 consecutive SIS domains span residues asparagine 295–lysine 434 and cysteine 467–proline 608. Lysine 613 serves as the catalytic For Fru-6P isomerization activity.

In terms of assembly, homodimer.

Its subcellular location is the cytoplasm. The catalysed reaction is D-fructose 6-phosphate + L-glutamine = D-glucosamine 6-phosphate + L-glutamate. In terms of biological role, catalyzes the first step in hexosamine metabolism, converting fructose-6P into glucosamine-6P using glutamine as a nitrogen source. The sequence is that of Glutamine--fructose-6-phosphate aminotransferase [isomerizing] from Methanosarcina mazei (strain ATCC BAA-159 / DSM 3647 / Goe1 / Go1 / JCM 11833 / OCM 88) (Methanosarcina frisia).